The primary structure comprises 319 residues: Lipoyl synthase (319 aa).

The segment at 1–28 (MVVLVDTVSSTPVRPRHPEKAARPDALS) is disordered. The segment covering 16–28 (RHPEKAARPDALS) has biased composition (basic and acidic residues). [4Fe-4S] cluster-binding residues include Cys61, Cys66, Cys72, Cys87, Cys91, Cys94, and Ser300. Residues 73 to 289 (WDKKHATFMI…AKTAYAKGFL (217 aa)) form the Radical SAM core domain.

This sequence belongs to the radical SAM superfamily. Lipoyl synthase family. It depends on [4Fe-4S] cluster as a cofactor.

It localises to the cytoplasm. It carries out the reaction [[Fe-S] cluster scaffold protein carrying a second [4Fe-4S](2+) cluster] + N(6)-octanoyl-L-lysyl-[protein] + 2 oxidized [2Fe-2S]-[ferredoxin] + 2 S-adenosyl-L-methionine + 4 H(+) = [[Fe-S] cluster scaffold protein] + N(6)-[(R)-dihydrolipoyl]-L-lysyl-[protein] + 4 Fe(3+) + 2 hydrogen sulfide + 2 5'-deoxyadenosine + 2 L-methionine + 2 reduced [2Fe-2S]-[ferredoxin]. It functions in the pathway protein modification; protein lipoylation via endogenous pathway; protein N(6)-(lipoyl)lysine from octanoyl-[acyl-carrier-protein]: step 2/2. Its function is as follows. Catalyzes the radical-mediated insertion of two sulfur atoms into the C-6 and C-8 positions of the octanoyl moiety bound to the lipoyl domains of lipoate-dependent enzymes, thereby converting the octanoylated domains into lipoylated derivatives. In Rhodopseudomonas palustris (strain HaA2), this protein is Lipoyl synthase.